The chain runs to 243 residues: Precursor of CEP9 (243 aa).

The first 26 residues, 1 to 26 (MKLLSITLTSIVISMVFYQTPITTEA), serve as a signal peptide directing secretion. Residues 28 to 44 (SLRKTNDQDHFKAGFTD) constitute a propeptide that is removed on maturation. Disordered stretches follow at residues 42 to 63 (FTDDFVPTSPGNSPGVGHKKGN), 91 to 173 (KTGS…VKGF), and 189 to 243 (NGQD…EPKA). Proline 48 is modified (hydroxyproline; partial). Residue proline 51 is modified to Hydroxyproline. Proline 55 bears the Hydroxyproline; partial mark. A propeptide spanning residues 60–96 (KKGNVNVEGFQDDFKPTEGRKLLKTNVQDHFKTGSTD) is cleaved from the precursor. 3 positions are modified to hydroxyproline: proline 100, proline 103, and proline 107. The propeptide occupies 112–148 (KKGNVNVESSEDDFKHKEGRKLQQTNGQNHFKTGSTD). A compositionally biased stretch (polar residues) spans 133 to 147 (LQQTNGQNHFKTGST). A hydroxyproline mark is found at proline 152, proline 155, and proline 159. Residues 164-200 (KKGHANVKGFKDDFAPTEEIRLQKMNGQDHFKTGSTD) constitute a propeptide that is removed on maturation. Proline 204, proline 207, and proline 211 each carry hydroxyproline. Residues 216 to 219 (KKGD) constitute a propeptide that is removed on maturation. 3 positions are modified to hydroxyproline: proline 223, proline 226, and proline 230. Positions 235 to 243 (AVKNDEPKA) are excised as a propeptide.

This sequence belongs to the C-terminally encoded plant signaling peptide (CEP) family. Interacts with CEP receptors (e.g. CEPR1 and CEPR2). Post-translationally, hydroxylated peptide is more active than non-hydroxylated peptide. The mature small signaling peptide is generated by proteolytic processing of the longer precursor. Expressed in lateral root primordia and in lateral roots excluding the meristem region. Also present in the aerial tissues, such as leaf petioles and the shoot apex region.

The protein resides in the secreted. Its subcellular location is the extracellular space. It localises to the apoplast. Functionally, extracellular signaling peptide that represses primary root growth rate and significantly inhibits lateral root formation. Modulates leaf morphology. Regulates systemic nitrogen (N)-demand signaling. Mediates up-regulation of genes involved in N uptake and assimilation pathways. The chain is Precursor of CEP9 from Arabidopsis thaliana (Mouse-ear cress).